The chain runs to 184 residues: Peptide deformylase (184 aa).

Cys-111 and His-154 together coordinate Fe cation. Glu-155 is a catalytic residue. His-158 is a Fe cation binding site.

The protein belongs to the polypeptide deformylase family. It depends on Fe(2+) as a cofactor.

The enzyme catalyses N-terminal N-formyl-L-methionyl-[peptide] + H2O = N-terminal L-methionyl-[peptide] + formate. Functionally, removes the formyl group from the N-terminal Met of newly synthesized proteins. Requires at least a dipeptide for an efficient rate of reaction. N-terminal L-methionine is a prerequisite for activity but the enzyme has broad specificity at other positions. The chain is Peptide deformylase from Lactobacillus helveticus (strain DPC 4571).